A 561-amino-acid polypeptide reads, in one-letter code: DNA ligase B (561 aa).

Catalysis depends on Lys125, which acts as the N6-AMP-lysine intermediate.

It belongs to the NAD-dependent DNA ligase family. LigB subfamily.

The catalysed reaction is NAD(+) + (deoxyribonucleotide)n-3'-hydroxyl + 5'-phospho-(deoxyribonucleotide)m = (deoxyribonucleotide)n+m + AMP + beta-nicotinamide D-nucleotide.. In terms of biological role, catalyzes the formation of phosphodiester linkages between 5'-phosphoryl and 3'-hydroxyl groups in double-stranded DNA using NAD as a coenzyme and as the energy source for the reaction. The chain is DNA ligase B from Salmonella paratyphi B (strain ATCC BAA-1250 / SPB7).